We begin with the raw amino-acid sequence, 324 residues long: tRNA dimethylallyltransferase (324 aa).

Residue 17 to 24 (GPTASGKT) participates in ATP binding. 19 to 24 (TASGKT) lines the substrate pocket. Interaction with substrate tRNA regions lie at residues 42 to 45 (DSAL), 166 to 170 (QRIQR), and 251 to 256 (RCVGYR).

It belongs to the IPP transferase family. Monomer. Mg(2+) is required as a cofactor.

It carries out the reaction adenosine(37) in tRNA + dimethylallyl diphosphate = N(6)-dimethylallyladenosine(37) in tRNA + diphosphate. Its function is as follows. Catalyzes the transfer of a dimethylallyl group onto the adenine at position 37 in tRNAs that read codons beginning with uridine, leading to the formation of N6-(dimethylallyl)adenosine (i(6)A). The protein is tRNA dimethylallyltransferase of Burkholderia thailandensis (strain ATCC 700388 / DSM 13276 / CCUG 48851 / CIP 106301 / E264).